Reading from the N-terminus, the 239-residue chain is Ankyrin repeat domain-containing protein 49 (239 aa).

Serine 49 is modified (phosphoserine). ANK repeat units follow at residues 73-103, 107-136, 140-169, and 173-206; these read DPSR…HVNT, DEYT…DVHA, DGWT…DINA, and GLLT…GLKN.

Widely expressed in fetus, at a high level in fetal liver, brain and lung.

The protein resides in the nucleus. Its function is as follows. Induces HBG1 expression. May have a role in spermatogenesis where it promotes autophagy in response to serum starvation, via the NF-kappaB pathway. The sequence is that of Ankyrin repeat domain-containing protein 49 (ANKRD49) from Homo sapiens (Human).